We begin with the raw amino-acid sequence, 430 residues long: Immunoglobulin heavy constant delta (430 aa).

Residues 1–406 (APTKAPDVFP…FDDVGSLWTT (406 aa)) are Extracellular-facing. In terms of domain architecture, Ig-like 1 spans 6 to 98 (PDVFPIISGC…TASKSKKEIF (93 aa)). Residues Cys28 and Cys84 are joined by a disulfide bond. The interval 96-167 (EIFRWPESPK…TPECPSHTQP (72 aa)) is disordered. A compositionally biased stretch (polar residues) spans 106-118 (AQASSVPTAQPQA). Residues Ser109 and Ser110 are each glycosylated (O-linked (GalNAc...) serine). 5 O-linked (GalNAc...) threonine glycosylation sites follow: Thr113, Thr126, Thr127, Thr131, and Thr132. Basic and acidic residues predominate over residues 138–158 (GGEEKKKEKEKEEQEERETKT). Ig-like domains lie at 175 to 263 (PAVQ…RLMA) and 267 to 373 (PAAQ…RSLE). Disulfide bonds link Cys190–Cys249 and Cys294–Cys355. Asn225, Asn316, and Asn367 each carry an N-linked (GlcNAc...) asparagine glycan. The helical transmembrane segment at 407–427 (LSTFVALFILTLLYSGIVTFI) threads the bilayer. Over 428-430 (KVK) the chain is Cytoplasmic.

Immunoglobulins are composed of two identical heavy chains and two identical light chains; disulfide-linked. An IgD molecule contains thus a delta heavy chain combined with either a kappa or a lambda light chains. Kappa light chains are found predominantly on the membrane IgD (mIgD) form and lambda on the secreted IgD (sIgD) form, this fact is poorly understood. Membrane-bound IgD molecules are non-covalently associated with a heterodimer of CD79A and CD79B.

The protein localises to the secreted. It localises to the cell membrane. Its function is as follows. Constant region of immunoglobulin heavy chains. Immunoglobulins, also known as antibodies, are membrane-bound or secreted glycoproteins produced by B lymphocytes. In the recognition phase of humoral immunity, the membrane-bound immunoglobulins serve as receptors which, upon binding of a specific antigen, trigger the clonal expansion and differentiation of B lymphocytes into immunoglobulins-secreting plasma cells. Secreted immunoglobulins mediate the effector phase of humoral immunity, which results in the elimination of bound antigens. The antigen binding site is formed by the variable domain of one heavy chain, together with that of its associated light chain. Thus, each immunoglobulin has two antigen binding sites with remarkable affinity for a particular antigen. The variable domains are assembled by a process called V-(D)-J rearrangement and can then be subjected to somatic hypermutations which, after exposure to antigen and selection, allow affinity maturation for a particular antigen. IgD is the major antigen receptor isotype on the surface of most peripheral B-cells, where it is coexpressed with IgM. The membrane-bound IgD (mIgD) induces the phosphorylation of CD79A and CD79B by the Src family of protein tyrosine kinases. Soluble IgD (sIgD) concentration in serum below those of IgG, IgA, and IgM but much higher than that of IgE. IgM and IgD molecules present on B cells have identical V regions and antigen-binding sites. After the antigen binds to the B-cell receptor, the secreted form sIgD is shut off. IgD is a potent inducer of TNF, IL1B, and IL1RN. IgD also induces release of IL6, IL10, and LIF from peripheral blood mononuclear cells. Monocytes seem to be the main producers of cytokines in vitro in the presence of IgD. The polypeptide is Immunoglobulin heavy constant delta (Homo sapiens (Human)).